The chain runs to 923 residues: Protein prickle (923 aa).

Positions 1 to 196 (MSYPYQKSHH…HPFHSPASAA (196 aa)) are disordered. The span at 11 to 34 (QTQQPQQNGHPQHQLMLQQQQQAD) shows a compositional bias: low complexity. A compositionally biased stretch (basic residues) spans 37–49 (PHHHHHHHVHHAT). 2 stretches are compositionally biased toward low complexity: residues 59 to 73 (RSPL…LYSG) and 106 to 118 (MPGM…PPGM). The segment covering 122–134 (LGGGGGGGGGGSA) has biased composition (gly residues). Composition is skewed to low complexity over residues 152–169 (STVT…SARS) and 184–196 (SSHH…ASAA). In terms of domain architecture, PET spans 275 to 383 (GGGHNYSQSD…TVKQITTTLI (109 aa)). 3 consecutive LIM zinc-binding domains span residues 382–446 (LICE…ETLK), 447–507 (PRCS…MFAE), and 508–570 (YCDY…GEPP). Disordered regions lie at residues 571–668 (TPSD…LDLT) and 703–867 (GPIA…SSAD). Gly residues predominate over residues 709-718 (NGNGPTGGGP). The segment covering 738–748 (ESPSFSGTNSP) has biased composition (polar residues). Residues 777-786 (HSIKEVRFEG) are compositionally biased toward basic and acidic residues. Residues 792–805 (LPRTKSYCQRNGGQ) show a composition bias toward polar residues. The segment covering 817 to 827 (SDDDELAEDET) has biased composition (acidic residues). A compositionally biased stretch (basic and acidic residues) spans 840 to 852 (QREQQRPVDDSDA). Positions 853 to 865 (RSVCSTCSSSSSS) are enriched in low complexity.

This sequence belongs to the prickle / espinas / testin family. In terms of assembly, interacts with dsh; PET and LIM domains interact with dsh DEP domain, in wing cells. Interacts with Vang in photoreceptor cells.

Its subcellular location is the cell membrane. In terms of biological role, acts in a planar cell polarity (PCP) complex; polarization along the apical/basal axis of epithelial cells. PCP signaling in the wing disk requires the receptor fz and the cytoplasmic proteins dsh and pk. These act in a feedback loop leading to activation of the jnk cascade and subsequent polarized arrangement of hairs and bristles. Dgo and pk compete with one another for dsh binding, thereby modulating fz dsh activity and ensuring tight control over fz PCP signaling. Vang, stan and pk function together to regulate the establishment of tissue polarity in the adult eye. The chain is Protein prickle from Anopheles gambiae (African malaria mosquito).